Here is a 399-residue protein sequence, read N- to C-terminus: S-adenosylmethionine synthase (399 aa).

Position 17 (histidine 17) interacts with ATP. Residue aspartate 19 coordinates Mg(2+). Glutamate 45 is a K(+) binding site. L-methionine contacts are provided by glutamate 58 and glutamine 101. A flexible loop region spans residues 101 to 111 (QSADIAMGVDQ). ATP is bound by residues 177–179 (DGK), 244–245 (RF), aspartate 253, 259–260 (RK), alanine 276, and lysine 280. Aspartate 253 lines the L-methionine pocket. Residue lysine 284 participates in L-methionine binding.

Belongs to the AdoMet synthase family. Homotetramer; dimer of dimers. Mg(2+) is required as a cofactor. It depends on K(+) as a cofactor.

The protein resides in the cytoplasm. It carries out the reaction L-methionine + ATP + H2O = S-adenosyl-L-methionine + phosphate + diphosphate. The protein operates within amino-acid biosynthesis; S-adenosyl-L-methionine biosynthesis; S-adenosyl-L-methionine from L-methionine: step 1/1. Its function is as follows. Catalyzes the formation of S-adenosylmethionine (AdoMet) from methionine and ATP. The overall synthetic reaction is composed of two sequential steps, AdoMet formation and the subsequent tripolyphosphate hydrolysis which occurs prior to release of AdoMet from the enzyme. The chain is S-adenosylmethionine synthase from Bacillus thuringiensis (strain Al Hakam).